Here is a 345-residue protein sequence, read N- to C-terminus: MPSPFPRRRCLPGDFSPSVDSRPCSSPCELPGPTGKLFLGGTPPRALRLPRRLAWCSIDWEQVCLLQRLGAGGFGSVYKATYHGVPVAIKQVSRCTKNRLASQRSFWAELNIARLRHANIVRVVAASTRTPAAFDSLGSIIMEFGGNVTLHQVIYGATGCPEEDGPPCSAGEQLNLEKCLKYSLDVVSGLLFLHSQGIVHLDLKPANILISEQDVCKISDFGCSERLEDLRFRPRHHLGGTYTHRAPELLKGEPVTPKADIYSFAITLWQMTTRQVPYSGERQHVLYAVVAYNLRPSLSAAVFTESVPGKKLEDIIQCGWTAPAQQRPSAQLLLLDLRALQAELG.

The Protein kinase domain maps to 63–344 (VCLLQRLGAG…LDLRALQAEL (282 aa)). ATP contacts are provided by residues 69–77 (LGAGGFGSV) and Lys-90. Asp-202 acts as the Proton acceptor in catalysis.

Belongs to the protein kinase superfamily. Ser/Thr protein kinase family. In terms of assembly, interacts with MAP2K1/MEK1. As to expression, restricted to gonadal tissues.

It localises to the cytoplasm. The enzyme catalyses L-seryl-[protein] + ATP = O-phospho-L-seryl-[protein] + ADP + H(+). The catalysed reaction is L-threonyl-[protein] + ATP = O-phospho-L-threonyl-[protein] + ADP + H(+). Its function is as follows. Serine/threonine kinase involved in the regulation of MAPK signaling. Is an activator of the ERK1/2 signaling cascade playing an essential role in the stimulation of oocyte maturation. This is Proto-oncogene serine/threonine-protein kinase mos from Sus scrofa (Pig).